The primary structure comprises 311 residues: 3'(2'),5'-bisphosphate nucleotidase 1 (311 aa).

Asp-49 functions as the Proton acceptor in the catalytic mechanism. Mg(2+) contacts are provided by Glu-72, Asp-116, Leu-118, and Asp-119. Thr-121 (proton acceptor) is an active-site residue. Positions 202, 205, 227, and 231 each coordinate AMP. Residue Asp-254 coordinates Mg(2+).

Belongs to the inositol monophosphatase superfamily. Mg(2+) serves as cofactor.

The enzyme catalyses adenosine 3',5'-bisphosphate + H2O = AMP + phosphate. It catalyses the reaction adenosine 2',5'-bisphosphate + H2O = AMP + phosphate. The catalysed reaction is 3'-phosphoadenylyl sulfate + H2O = adenosine 5'-phosphosulfate + phosphate. It carries out the reaction 1D-myo-inositol 1,4-bisphosphate + H2O = 1D-myo-inositol 4-phosphate + phosphate. The enzyme catalyses 1D-myo-inositol 1,3,4-trisphosphate + H2O = 1D-myo-inositol 3,4-bisphosphate + phosphate. Its activity is regulated as follows. Inhibited by Li(+) and Ca(2+), but not by Na(+). Functionally, phosphatase that converts 3'(2')-phosphoadenosine 5'-phosphate (PAP) to AMP and adenosine 3'-phosphate 5'-phosphosulfate (PAPS) to adenosine 5'-phosphosulfate (APS). Is also able to hydrolyze inositol 1,4-bisphosphate (Ins(1,4)P2) and inositol 1,3,4-trisphosphate (Ins(1,3,4)P3), but is not active on AMP, 3'-AMP, fructose-1,6-bisphosphate, Ins(1)P, Ins(2)P and Ins(1,4,5)P3. Probably prevents the toxic accumulation of PAP, a compound which inhibits a variety of proteins, including PAPS-utilizing enzymes such as sulfotransferases, and RNA processing enzymes. Could also play a role in inositol recycling and phosphoinositide metabolism. This Dictyostelium discoideum (Social amoeba) protein is 3'(2'),5'-bisphosphate nucleotidase 1 (bpnt1).